The sequence spans 496 residues: L-arabinose isomerase (496 aa).

Residues Glu302, Glu329, His346, and His445 each contribute to the Mn(2+) site.

The protein belongs to the arabinose isomerase family. The cofactor is Mn(2+).

The enzyme catalyses beta-L-arabinopyranose = L-ribulose. Its pathway is carbohydrate degradation; L-arabinose degradation via L-ribulose; D-xylulose 5-phosphate from L-arabinose (bacterial route): step 1/3. In terms of biological role, catalyzes the conversion of L-arabinose to L-ribulose. This is L-arabinose isomerase from Thermotoga petrophila (strain ATCC BAA-488 / DSM 13995 / JCM 10881 / RKU-1).